Consider the following 514-residue polypeptide: ATP synthase subunit alpha 2 (514 aa).

170–177 (GDRQTGKT) provides a ligand contact to ATP.

The protein belongs to the ATPase alpha/beta chains family. As to quaternary structure, F-type ATPases have 2 components, CF(1) - the catalytic core - and CF(0) - the membrane proton channel. CF(1) has five subunits: alpha(3), beta(3), gamma(1), delta(1), epsilon(1). CF(0) has three main subunits: a(1), b(2) and c(9-12). The alpha and beta chains form an alternating ring which encloses part of the gamma chain. CF(1) is attached to CF(0) by a central stalk formed by the gamma and epsilon chains, while a peripheral stalk is formed by the delta and b chains.

Its subcellular location is the cell inner membrane. The catalysed reaction is ATP + H2O + 4 H(+)(in) = ADP + phosphate + 5 H(+)(out). Its function is as follows. Produces ATP from ADP in the presence of a proton gradient across the membrane. The alpha chain is a regulatory subunit. The chain is ATP synthase subunit alpha 2 from Hahella chejuensis (strain KCTC 2396).